A 1300-amino-acid polypeptide reads, in one-letter code: uncharacterized protein (1300 aa).

The disordered stretch occupies residues 1–1205; it reads MVLLRSGLGT…GKTLGLDPLY (1205 aa). Positions 51 to 69 are enriched in basic residues; sequence GRKRKKGPKKSGGKKKKRK. Residues 73 to 143 show a composition bias toward gly residues; the sequence is EGPGGGEGPG…GPGGGEGPGG (71 aa). Positions 145–165 are enriched in basic residues; the sequence is SRKRKRGDGSKKHGGKKKKKT. The segment covering 237-246 has biased composition (low complexity); that stretch reads PDGPGAQEGP. The span at 250 to 270 shows a compositional bias: acidic residues; it reads EGPEGDEGPEGPEGPEGEGPE. The segment covering 280–289 has biased composition (low complexity); sequence PDGPGAQEGP. 2 stretches are compositionally biased toward acidic residues: residues 295-343 and 357-417; these read PDED…DSPD and PDED…EGDS. A compositionally biased stretch (low complexity) spans 418–427; sequence PDGPGAQEGP. Acidic residues-rich tracts occupy residues 431–469, 477–494, 517–558, and 581–630; these read EGPE…PEGE, PEGE…EGPE, EGPE…EGPE, and EGPE…EGDS. Gly residues predominate over residues 674-686; the sequence is SGPGSSEGEGPSG. Composition is skewed to acidic residues over residues 713 to 726, 736 to 749, 759 to 772, and 820 to 883; these read PDED…DGTE, PDED…EGTE, and SDDE…EEEV. A compositionally biased stretch (basic and acidic residues) spans 903-917; it reads GEEKGEGEKGKGREE. 2 stretches are compositionally biased toward gly residues: residues 922-1010 and 1021-1031; these read GGEG…GEGG and GGEGGEGGEGG. A compositionally biased stretch (basic residues) spans 1183-1195; that stretch reads RPPKHHPQTKRAQ.

This is an uncharacterized protein from Connochaetes taurinus (Blue wildebeest).